The primary structure comprises 314 residues: Triplex capsid protein 2 (314 aa).

Belongs to the herpesviridae TRX2 protein family. In terms of assembly, interacts with TRX1 and major capisd protein/MCP.

It is found in the virion. The protein localises to the host nucleus. Its function is as follows. Structural component of the T=16 icosahedral capsid. The capsid is composed of pentamers and hexamers of major capsid protein/MCP, which are linked together by heterotrimers called triplexes. These triplexes are formed by a single molecule of triplex protein 1/TRX1 and two copies of triplex protein 2/TRX2. Additionally, TRX1 is required for efficient transport of TRX2 to the nucleus, which is the site of capsid assembly. The chain is Triplex capsid protein 2 from Equine herpesvirus 1 (strain Ab4p) (EHV-1).